Here is a 449-residue protein sequence, read N- to C-terminus: Probable glycine dehydrogenase (decarboxylating) subunit 1 (449 aa).

The protein belongs to the GcvP family. N-terminal subunit subfamily. In terms of assembly, the glycine cleavage system is composed of four proteins: P, T, L and H. In this organism, the P 'protein' is a heterodimer of two subunits.

It catalyses the reaction N(6)-[(R)-lipoyl]-L-lysyl-[glycine-cleavage complex H protein] + glycine + H(+) = N(6)-[(R)-S(8)-aminomethyldihydrolipoyl]-L-lysyl-[glycine-cleavage complex H protein] + CO2. Functionally, the glycine cleavage system catalyzes the degradation of glycine. The P protein binds the alpha-amino group of glycine through its pyridoxal phosphate cofactor; CO(2) is released and the remaining methylamine moiety is then transferred to the lipoamide cofactor of the H protein. The chain is Probable glycine dehydrogenase (decarboxylating) subunit 1 from Pyrococcus abyssi (strain GE5 / Orsay).